Consider the following 152-residue polypeptide: UPF0179 protein Mlab_1307 (152 aa).

Belongs to the UPF0179 family.

This Methanocorpusculum labreanum (strain ATCC 43576 / DSM 4855 / Z) protein is UPF0179 protein Mlab_1307.